We begin with the raw amino-acid sequence, 236 residues long: tRNA1(Val) (adenine(37)-N6)-methyltransferase (236 aa).

The protein belongs to the methyltransferase superfamily. tRNA (adenine-N(6)-)-methyltransferase family.

The protein resides in the cytoplasm. It catalyses the reaction adenosine(37) in tRNA1(Val) + S-adenosyl-L-methionine = N(6)-methyladenosine(37) in tRNA1(Val) + S-adenosyl-L-homocysteine + H(+). Specifically methylates the adenine in position 37 of tRNA(1)(Val) (anticodon cmo5UAC). The chain is tRNA1(Val) (adenine(37)-N6)-methyltransferase from Aeromonas hydrophila subsp. hydrophila (strain ATCC 7966 / DSM 30187 / BCRC 13018 / CCUG 14551 / JCM 1027 / KCTC 2358 / NCIMB 9240 / NCTC 8049).